Reading from the N-terminus, the 338-residue chain is Phosphate acyltransferase (338 aa).

The protein belongs to the PlsX family. Homodimer. Probably interacts with PlsY.

The protein resides in the cytoplasm. It carries out the reaction a fatty acyl-[ACP] + phosphate = an acyl phosphate + holo-[ACP]. Its pathway is lipid metabolism; phospholipid metabolism. Functionally, catalyzes the reversible formation of acyl-phosphate (acyl-PO(4)) from acyl-[acyl-carrier-protein] (acyl-ACP). This enzyme utilizes acyl-ACP as fatty acyl donor, but not acyl-CoA. This is Phosphate acyltransferase from Gloeobacter violaceus (strain ATCC 29082 / PCC 7421).